Reading from the N-terminus, the 225-residue chain is Probable GTP-binding protein EngB (225 aa).

One can recognise an EngB-type G domain in the interval 40 to 224; the sequence is GPPEVAFAGR…RAAIVHAVTA (185 aa). Residues 48 to 55, 75 to 79, 102 to 105, 169 to 172, and 203 to 205 contribute to the GTP site; these read GRSNVGKS, GRTQE, DMPG, TKAD, and TSS. Residues Ser-55 and Thr-77 each contribute to the Mg(2+) site.

The protein belongs to the TRAFAC class TrmE-Era-EngA-EngB-Septin-like GTPase superfamily. EngB GTPase family. It depends on Mg(2+) as a cofactor.

Functionally, necessary for normal cell division and for the maintenance of normal septation. This is Probable GTP-binding protein EngB from Chelativorans sp. (strain BNC1).